The sequence spans 906 residues: MEEQQPPSIKKKIVDFLTNFLKKRPSHEDLRRDNILVAPNNVSPAIQPSRYELEGHLNPSSHNRDDSSNNNNNNNNNNNTVEYSRGHSKSHSRSDSKHHNRENSKSDRDNSRSDNIRFGRKDTFKNAWDYLRNIDFTFSKTKYGNTVVHRLKHPQFGLSPEELQSLYPDQPHGIPIVLTKCFEYLSKHLETEGLFRVPGSNREVSLLKFKIEDGDLDFSEVLIPYNICGLISTFFKELPEPLIPFDYYNDAILITKLGSKDKYIIGLRDLVLSLPPANLCMLRKLLEFLLTVEKKNEFNKMTISNISIIFGVTLLKDPDTVDPMKSLNNIQAQSTIIKYMLEYFNDIFKEASVVKAYRKSIVPKEPMDTTSISYLDPAESNGGSPRTSNTPYQQQHQLSSQSMANIKPRPPSRSKMMRETIVLSPRVSGGNNQVYANATMTRPMSRLFFDPEIIPSPPPTTTTTTTTTTNTTTTTTTTNTTPNNTTTVNIQQKPVPPKPNLIPRKLPPNPNYSTYPAPLPPRQPNTIPLAPIPPPKPNSTYKKQITQPPPPRKPTSPSPPIATLKPTSKSDFIPSTNNNLNNNNTTTTTSSLISIPKAKPPPPKRNNVVSPAIEEPINPNLNINSTTTTPTPPLASFKNNGTISSGSKSNPNLQNLLNTNQPLVSSNGPPNKPPPQPFELLKSKPITTTPTIKKGVTFSETPKISNSPPSPSSSSPSPPHNQPIIVNKPIPSKSAPPPVRTTSSPSIVTKKFVPTIPTQTTTASSSSTPTTPKNQHLSKDDSSIPPINTSQTNNNISNSSIPSPKSKSALSLSTPKDSITGKPIKPPSNSDLSISTTPLPPTSSSPTSSSPLQSPKISSPSVLTVSQKIALNEKIAANQAKKNPLSNSGGLKQISPDLIKSNNINK.

Residues 53 to 117 are disordered; the sequence is LEGHLNPSSH…RDNSRSDNIR (65 aa). A compositionally biased stretch (low complexity) spans 69-79; the sequence is NNNNNNNNNNN. Over residues 92–117 the composition is skewed to basic and acidic residues; sequence SRSDSKHHNRENSKSDRDNSRSDNIR. The region spanning 161–348 is the Rho-GAP domain; sequence EELQSLYPDQ…YMLEYFNDIF (188 aa). Disordered stretches follow at residues 368-415, 452-864, and 877-906; these read DTTS…SRSK, EIIP…SVLT, and ANQAKKNPLSNSGGLKQISPDLIKSNNINK. The span at 381–404 shows a compositional bias: polar residues; that stretch reads NGGSPRTSNTPYQQQHQLSSQSMA. Over residues 461-487 the composition is skewed to low complexity; it reads TTTTTTTTTNTTTTTTTTNTTPNNTTT. Composition is skewed to pro residues over residues 494–510 and 547–560; these read PVPPKPNLIPRKLPPNP and QPPPPRKPTSPSPP. Positions 565 to 574 are enriched in polar residues; it reads KPTSKSDFIP. 2 stretches are compositionally biased toward low complexity: residues 575–597 and 613–629; these read STNNNLNNNNTTTTTSSLISIPK and IEEPINPNLNINSTTTT. The segment covering 637–649 has biased composition (polar residues); that stretch reads FKNNGTISSGSKS. Low complexity-rich tracts occupy residues 650-663 and 683-694; these read NPNLQNLLNTNQPL and SKPITTTPTIKK. Over residues 708–721 the composition is skewed to pro residues; the sequence is PPSPSSSSPSPPHN. Low complexity-rich tracts occupy residues 754-772, 785-816, and 844-861; these read PTIPTQTTTASSSSTPTTP, PPINTSQTNNNISNSSIPSPKSKSALSLSTPK, and SSPTSSSPLQSPKISSPS. Polar residues predominate over residues 880–890; sequence AKKNPLSNSGG.

It localises to the cytoplasm. In terms of biological role, rho GTPase-activating protein involved in the signal transduction pathway. This chain is Rho GTPase-activating protein gacJ (gacJ), found in Dictyostelium discoideum (Social amoeba).